A 757-amino-acid polypeptide reads, in one-letter code: Voltage-gated potassium channel KCNC3 (757 aa).

The segment at 1-78 (MLSSVCVSSF…CPGLPAAAMG (78 aa)) is important for normal N-type inactivation. The tract at residues 1–87 (MLSSVCVSSF…GRHGGGGGDS (87 aa)) is disordered. Residues 1–290 (MLSSVCVSSF…EDPYSSRAAR (290 aa)) lie on the Cytoplasmic side of the membrane. A compositionally biased stretch (pro residues) spans 21 to 40 (PAPPPQPPESPPPPPLPPQQ). Residues 41–52 (QQPAQPGPAASP) show a composition bias toward low complexity. The Zn(2+) site is built by His-157, Cys-163, Cys-184, and Cys-185. Low complexity predominate over residues 210 to 219 (AANAANAAGA). The segment at 210–232 (AANAANAAGAHDGGLDDEAGAGG) is disordered. Residues 291–309 (YVAFASLFFILISITTFCL) form a helical membrane-spanning segment. Residues Asn-320 and Asn-336 are each glycosylated (N-linked (GlcNAc...) asparagine). A helical membrane pass occupies residues 351–370 (VEGVCVVWFTFEFLMRITFC). The Cytoplasmic segment spans residues 371–379 (PDKVEFLKS). The helical transmembrane segment at 380–398 (SLNIIDCVAILPFYLEVGL) threads the bilayer. The chain crosses the membrane as a helical; Voltage-sensor span at residues 412–434 (FLRVVRFVRILRIFKLTRHFVGL). The Cytoplasmic portion of the chain corresponds to 435-447 (RVLGHTLRASTNE). A helical transmembrane segment spans residues 448 to 469 (FLLLIIFLALGVLIFATMIYYA). The N-linked (GlcNAc...) asparagine glycan is linked to Asn-483. Positions 503, 504, 505, and 506 each coordinate K(+). A Selectivity filter motif is present at residues 503 to 508 (TLGYGD). The chain crosses the membrane as a helical span at residues 518 to 539 (LVGALCALAGVLTIAMPVPVIV). Over 540–757 (NNFGMYYSLA…NANAAAWISP (218 aa)) the chain is Cytoplasmic. The segment at 556–613 (PKKKNKHIPRPPQPGSPNYCKPDPPPPPPPHPHHGSGGISPPPPITPPSMGVTVAGAY) is disordered. Arg-625 carries the omega-N-methylarginine modification. Residues 682–746 (QPAMSPEDKS…KPGPPSFLPD (65 aa)) form a disordered region. 2 positions are modified to phosphoserine: Ser-686 and Ser-691. Over residues 728–743 (PPLPPQDWRKPGPPSF) the composition is skewed to pro residues.

Belongs to the potassium channel family. C (Shaw) (TC 1.A.1.2) subfamily. Kv3.3/KCNC3 sub-subfamily. As to quaternary structure, homotetramer. Heterotetramer with KCNC1. Interacts (via C-terminus) with HAX1; this interaction modulates channel gating. Identified in a complex with ACTR3, a subunit of the Arp2/3 complex; this interaction is indirect and depends on the presence of HAX1. N-glycosylated.

The protein localises to the cell membrane. It is found in the presynaptic cell membrane. The protein resides in the perikaryon. It localises to the cell projection. Its subcellular location is the axon. The protein localises to the dendrite. It is found in the dendritic spine membrane. The protein resides in the cytoplasm. It localises to the cell cortex. Its subcellular location is the cytoskeleton. It catalyses the reaction K(+)(in) = K(+)(out). Voltage-gated potassium channel that plays an important role in the rapid repolarization of fast-firing brain neurons. The channel opens in response to the voltage difference across the membrane, forming a potassium-selective channel through which potassium ions pass in accordance with their electrochemical gradient. The channel displays rapid activation and inactivation kinetics. It plays a role in the regulation of the frequency, shape and duration of action potentials in Purkinje cells. Required for normal survival of cerebellar neurons, probably via its role in regulating the duration and frequency of action potentials that in turn regulate the activity of voltage-gated Ca(2+) channels and cellular Ca(2+) homeostasis. Required for normal motor function. Plays a role in the reorganization of the cortical actin cytoskeleton and the formation of actin veil structures in neuronal growth cones via its interaction with HAX1 and the Arp2/3 complex. This is Voltage-gated potassium channel KCNC3 (KCNC3) from Homo sapiens (Human).